A 205-amino-acid chain; its full sequence is Superoxide dismutase [Fe] (205 aa).

Histidine 33, histidine 81, aspartate 167, and histidine 171 together coordinate Fe cation.

The protein belongs to the iron/manganese superoxide dismutase family. Homotetramer. Fe cation serves as cofactor.

It catalyses the reaction 2 superoxide + 2 H(+) = H2O2 + O2. Functionally, destroys superoxide anion radicals which are normally produced within the cells and which are toxic to biological systems. The chain is Superoxide dismutase [Fe] (sod) from Methanothermobacter thermautotrophicus (strain ATCC 29096 / DSM 1053 / JCM 10044 / NBRC 100330 / Delta H) (Methanobacterium thermoautotrophicum).